Consider the following 684-residue polypeptide: Phenoloxidase 1 (684 aa).

A propeptide spans 1–50 (MSDKNKLLLLFDRPLETVIVPRGPDQEAFDVPVDLLSDRYKAIGVQVSNR) (removed by PPAF1). N80 carries N-linked (GlcNAc...) asparagine glycosylation. Cu cation contacts are provided by H208, H212, and H237. E349 acts as the Proton acceptor in catalysis. N-linked (GlcNAc...) asparagine glycosylation is found at N352 and N356. Cu cation is bound by residues H364, H368, and H404. 3 N-linked (GlcNAc...) asparagine glycosylation sites follow: N486, N491, and N545. Cystine bridges form between C579-C621 and C581-C628.

It belongs to the tyrosinase family. Dimer. Might form a homodimer or a heterodimer with PPO1. Might interact with PPAF2 (via CLIP domain); the interaction might be required for PPO1 activity. Requires Cu(2+) as cofactor. In terms of processing, propeptide cleaved by PPAF1. As to expression, hemocytes.

Its subcellular location is the secreted. This is a copper-containing oxidase that functions in the formation of pigments such as melanins and other polyphenolic compounds. Catalyzes the oxidation of o-diphenols (N-acetyldopamine, 4-methylcatechol and dopamine). Cannot oxidize monophenols and p-phenols (L-tyrosine, tyramine, gentisic acid and hydroquinone). Binds to the surface of hemocytes and is involved in hemocyte melanization. Activation of the enzyme in response to bacterial lipopolysaccharides (LPS) suggests it may play a role in innate immunity. The polypeptide is Phenoloxidase 1 (Holotrichia diomphalia (Korean black chafer)).